The following is a 606-amino-acid chain: Scavenger receptor class A member 3 (606 aa).

The Cytoplasmic portion of the chain corresponds to 1–56 (MKVRSAGSDRDVLCVTEEDLAGEDEDMPSFPCTQEGRAGPRCNRCQKNLSLHTSVR). The chain crosses the membrane as a helical; Signal-anchor for type II membrane protein span at residues 57–77 (ILYLFLTLLLVAVAVLASLVF). Topologically, residues 78–606 (RKVDSLSEDI…PGPPGNQSPY (529 aa)) are extracellular. Residues N115, N182, N224, N257, N313, N337, N365, N400, N430, and N451 are each glycosylated (N-linked (GlcNAc...) asparagine). The disordered stretch occupies residues 455–606 (IRGVPGPPGP…PGPPGNQSPY (152 aa)). 2 Collagen-like domains span residues 456-558 (RGVP…PGPS) and 559-601 (GPQG…GPPG). The segment covering 497–516 (PQGQPGEPGPVGERGPAGPR) has biased composition (low complexity). Gly residues predominate over residues 526–535 (GSFGTGGPRG). Pro residues-rich tracts occupy residues 548-558 (PEGPPGSPGPS) and 591-606 (PGLPGPPGPPGNQSPY).

The protein resides in the endoplasmic reticulum membrane. It is found in the golgi apparatus membrane. Functionally, seems to protect cells by scavenging oxidative molecules or harmful products of oxidation. This is Scavenger receptor class A member 3 (Scara3) from Mus musculus (Mouse).